The sequence spans 38 residues: MKVRASVKKICRNCKMVRRNGVLRVICSVEPRHKQRQG.

It belongs to the bacterial ribosomal protein bL36 family.

The protein is Large ribosomal subunit protein bL36 of Cellvibrio japonicus (strain Ueda107) (Pseudomonas fluorescens subsp. cellulosa).